A 150-amino-acid chain; its full sequence is MAEIPEMTVQELKALMDSGAQDYVLVDVRNPNEYEIARIPGSVLVPLSEIENGPGVEKIRSLLNGHRLLVHCKMGGPLPKRWASSKRLALRESISKGASTLGVRKSTPAYPPTNPRLGAGRRKGMLRYMNFLEEKHALSRAIAALPRITT.

Positions 19–93 (GAQDYVLVDV…SSKRLALRES (75 aa)) constitute a Rhodanese domain.

This is an uncharacterized protein from Synechococcus elongatus.